The following is a 245-amino-acid chain: Ribosomal RNA large subunit methyltransferase E (245 aa).

Residues 1 to 26 form a disordered region; sequence MTKPPVGSNRSGRKLGQKVKKGKLKA. Basic residues predominate over residues 11–26; the sequence is SGRKLGQKVKKGKLKA. S-adenosyl-L-methionine-binding residues include glycine 81, tryptophan 83, aspartate 104, aspartate 120, and aspartate 144. Residue lysine 184 is the Proton acceptor of the active site.

The protein belongs to the class I-like SAM-binding methyltransferase superfamily. RNA methyltransferase RlmE family.

The protein localises to the cytoplasm. It catalyses the reaction uridine(2552) in 23S rRNA + S-adenosyl-L-methionine = 2'-O-methyluridine(2552) in 23S rRNA + S-adenosyl-L-homocysteine + H(+). Its function is as follows. Specifically methylates the uridine in position 2552 of 23S rRNA at the 2'-O position of the ribose in the fully assembled 50S ribosomal subunit. The chain is Ribosomal RNA large subunit methyltransferase E from Sinorhizobium medicae (strain WSM419) (Ensifer medicae).